Here is a 135-residue protein sequence, read N- to C-terminus: Hemoglobin subunit beta-3 (135 aa).

Residues 2–135 (HWTAEEKALV…VVDALSKAYQ (134 aa)) enclose the Globin domain. The heme b site is built by His57 and His81.

It belongs to the globin family. In terms of assembly, hb 3 is a heterotetramer of two alpha and two beta-3 chains. As to expression, red blood cells (at protein level).

In terms of biological role, involved in oxygen transport from gills to the various peripheral tissues. This is Hemoglobin subunit beta-3 from Somniosus microcephalus (Greenland sleeper shark).